Reading from the N-terminus, the 451-residue chain is Jacalin-related lectin 35 (451 aa).

A2 is subject to N-acetylalanine. 3 consecutive Jacalin-type lectin domains span residues 2–143 (AKKL…YIIP), 156–297 (LTKL…YIIP), and 306–448 (SNTI…NVAP).

It belongs to the jacalin lectin family. In terms of assembly, component of the PYK10 complex, at least composed of PYK10/BGLU23, BGLU21, BGLU22, JAL22, JAL23, PBP1/JAL30, PBP2/JAL31, JAL32, JAL33, JAL34, JAL35, GLL22 and GLL23.

In Arabidopsis thaliana (Mouse-ear cress), this protein is Jacalin-related lectin 35 (JAL35).